A 359-amino-acid polypeptide reads, in one-letter code: Serum paraoxonase/arylesterase 1 (359 aa).

C42 and C353 are oxidised to a cystine. N50 is a glycosylation site (N-linked (GlcNAc...) asparagine). Positions 53 and 54 each coordinate Ca(2+). H115 serves as the catalytic Proton acceptor. Positions 117, 168, 169, and 224 each coordinate Ca(2+). Residue N253 is glycosylated (N-linked (GlcNAc...) asparagine). The Ca(2+) site is built by D269 and N270. N-linked (GlcNAc...) asparagine glycosylation is found at N270 and N324.

Belongs to the paraoxonase family. As to quaternary structure, homodimer. Interacts with CLU. Ca(2+) is required as a cofactor. In terms of processing, glycosylated. Post-translationally, the signal sequence is not cleaved. In terms of tissue distribution, plasma. Associated with HDL.

The protein resides in the secreted. The protein localises to the extracellular space. It catalyses the reaction a phenyl acetate + H2O = a phenol + acetate + H(+). It carries out the reaction An aryl dialkyl phosphate + H2O = dialkyl phosphate + an aryl alcohol.. The enzyme catalyses an N-acyl-L-homoserine lactone + H2O = an N-acyl-L-homoserine + H(+). Functionally, hydrolyzes the toxic metabolites of a variety of organophosphorus insecticides. Capable of hydrolyzing a broad spectrum of organophosphate substrates and lactones, and a number of aromatic carboxylic acid esters. Mediates an enzymatic protection of low density lipoproteins against oxidative modification. This chain is Serum paraoxonase/arylesterase 1 (PON1), found in Oryctolagus cuniculus (Rabbit).